The sequence spans 339 residues: Ketol-acid reductoisomerase (NADP(+)) (339 aa).

The KARI N-terminal Rossmann domain occupies 1–182 (MKVYYDADCD…GGGRSGIIET (182 aa)). NADP(+)-binding positions include 24-27 (YGSQ), Arg48, Ser51, Ser53, and 83-86 (DEHQ). Residue His108 is part of the active site. Gly134 serves as a coordination point for NADP(+). A KARI C-terminal knotted domain is found at 183–328 (NFREECETDL…AKLRAMMPWI (146 aa)). Residues Asp191, Glu195, Glu227, and Glu231 each coordinate Mg(2+). A substrate-binding site is contributed by Ser252.

The protein belongs to the ketol-acid reductoisomerase family. Mg(2+) serves as cofactor.

The enzyme catalyses (2R)-2,3-dihydroxy-3-methylbutanoate + NADP(+) = (2S)-2-acetolactate + NADPH + H(+). The catalysed reaction is (2R,3R)-2,3-dihydroxy-3-methylpentanoate + NADP(+) = (S)-2-ethyl-2-hydroxy-3-oxobutanoate + NADPH + H(+). It participates in amino-acid biosynthesis; L-isoleucine biosynthesis; L-isoleucine from 2-oxobutanoate: step 2/4. It functions in the pathway amino-acid biosynthesis; L-valine biosynthesis; L-valine from pyruvate: step 2/4. Functionally, involved in the biosynthesis of branched-chain amino acids (BCAA). Catalyzes an alkyl-migration followed by a ketol-acid reduction of (S)-2-acetolactate (S2AL) to yield (R)-2,3-dihydroxy-isovalerate. In the isomerase reaction, S2AL is rearranged via a Mg-dependent methyl migration to produce 3-hydroxy-3-methyl-2-ketobutyrate (HMKB). In the reductase reaction, this 2-ketoacid undergoes a metal-dependent reduction by NADPH to yield (R)-2,3-dihydroxy-isovalerate. The sequence is that of Ketol-acid reductoisomerase (NADP(+)) from Novosphingobium aromaticivorans (strain ATCC 700278 / DSM 12444 / CCUG 56034 / CIP 105152 / NBRC 16084 / F199).